We begin with the raw amino-acid sequence, 368 residues long: MSKRKIKEEMLQVIAPEIYGPPKKEEQDYKPRKLKRVKKKKKDDDDELDDEVELLHATAPRRRVQWKGRRVKRVLRPGTTVVFTPGERSTRTYKRVYDEVYGDEDLLEQANERLGEFAYGKRHKDMLALPLDEGNPTPSLKPVTLQQVLPALAPSEEKRGLKRESGDLAPTVQLMVPKRQRLEDVLEKMTVEPGLEPEVRVRPIKQVAPGLGVQTVDVQIPTTSSTSIATATEGMETQTSPVASAVADAAVQAVAAAASKTSTEVQTDPWMFRVSAPRRPRGSRKYGAASALLPEYALHPSIAPTPGYRGYTYRPRRRATTRRRTTTGTRRRRRRRQPVLAPISVRRVAREGGRTLVLPTARYHPSIV.

2 disordered regions span residues 17-49 and 307-340; these read EIYG…DELD and GYRG…QPVL. A compositionally biased stretch (basic and acidic residues) spans 22-31; it reads PKKEEQDYKP. 2 stretches are compositionally biased toward basic residues: residues 32 to 41 and 314 to 337; these read RKLKRVKKKK and RPRR…RRRQ.

It belongs to the adenoviridae core-capsid bridging protein family. As to quaternary structure, monomer. Homodimer. Exists in equilibrium between monomers and dimers in solution. Interacts with the histone-like nucleoprotein; this interactions bridge the virus core to the capsid. Interacts with core protein X; this interactions bridge the virus core to the capsid. Interacts with the endosome lysis protein VI; this interactions bridge the virus core to the capsid. Interacts with the peripentonal hexons. Interacts with host NPM1; this interaction might play a role in virus assembly. In terms of processing, during virion entry, is ubiquitinated at the nuclear pore complex by host MIB1. This dissociates viral genomic DNA from capsid and allows genome delivery into nucleus for infection.

It localises to the virion. Its subcellular location is the host nucleus. It is found in the host nucleolus. Associates loosely with the viral DNA to form an outer shell around the nucleoprotein-DNA complex and links it with the capsid by binding the endosome lysis protein. During entry, secures the viral genome in the capsid until it reaches the nuclear pore complex, preventing innate immunity responses. Dissociates from the viral genome at nuclear pore. Might be involved in nuclear capsid assembly of the viral particles through its association with NPM1/nucleophosmin. The protein is Core-capsid bridging protein of Human adenovirus C serotype 5 (HAdV-5).